We begin with the raw amino-acid sequence, 121 residues long: Parathyroid hormone 4 (121 aa).

The signal sequence occupies residues 1–24; it reads MLKMQRSQQRVALMMLMVVAAVHC. Residues 25-29 constitute a propeptide that is removed on maturation; it reads QESES. A disordered region spans residues 77 to 97; the sequence is RSRGAQLYSQPGREESSGGQK.

It belongs to the parathyroid hormone family. In terms of tissue distribution, specifically expressed in a bilateral cluster of neurons in the dorsal region of the periventricular hypothalamus. Their axons project through the midbrain and hindbrain and down the spinal cord.

Its subcellular location is the secreted. Functionally, neuroendocrine peptide which is produced by a subset of neurons in the hypothalamus. Activates the G-protein coupled receptors pth1ra, pth1rb and pth2r with similar affinity. Receptor binding stimulates intracellular cAMP production. Plays a role in bone mineralization by regulating expression of factors involved in phosphate homeostasis. Important for embryonic bone development. The chain is Parathyroid hormone 4 from Danio rerio (Zebrafish).